Here is a 609-residue protein sequence, read N- to C-terminus: Chloride channel CLIC-like protein 1 (609 aa).

Residues 1-25 (MKLSSSSSFGLCILVVFFCFVVIES) form the signal peptide. Helical transmembrane passes span 212–235 (VSLI…SWFV), 241–260 (FAVS…YMLA), and 358–380 (VTLQ…YGSA). The interval 398-553 (EQPPPAVGQR…PSSIDVKTVG (156 aa)) is disordered. 2 stretches are compositionally biased toward basic and acidic residues: residues 454–474 (ENRE…KRTP) and 507–537 (EEVK…DRSE). Positions 538–547 (PITSEPPSSI) are enriched in low complexity.

This sequence belongs to the chloride channel MCLC family. Expressed in the hindbrain, swim bladder and the eye at 1 day post fertilization (dpf) with increased expression at 3 dpf. At 3 dpf, most prominent expression in the retina, with strong expression in the ganglion cell layer, outer nuclear layer and the retinal pigmented epithelium.

It localises to the endoplasmic reticulum membrane. The protein localises to the golgi apparatus membrane. It is found in the nucleus membrane. Its function is as follows. Seems to act as a chloride ion channel. Plays a role in retina development. The sequence is that of Chloride channel CLIC-like protein 1 from Danio rerio (Zebrafish).